A 1106-amino-acid chain; its full sequence is Probable ATP-citrate synthase (1106 aa).

Positions 358, 360, and 391 each coordinate citrate. Positions 442–459 (APQTTGQFLLSPERNTGG) are enriched in polar residues. A disordered region spans residues 442 to 478 (APQTTGQFLLSPERNTGGTERAPPSPAANATPTEHPL). Residues 701–721 (VIRY…EVGG) and 752–778 (ITSE…KNAA) contribute to the ATP site. Residue glutamate 718 coordinates Mg(2+). Residue histidine 760 is the Tele-phosphohistidine intermediate of the active site. 779–789 (LRASGALVPES) contacts CoA.

The protein in the N-terminal section; belongs to the succinate/malate CoA ligase beta subunit family. This sequence in the C-terminal section; belongs to the succinate/malate CoA ligase alpha subunit family. Homotetramer.

Its subcellular location is the cytoplasm. It catalyses the reaction oxaloacetate + acetyl-CoA + ADP + phosphate = citrate + ATP + CoA. In terms of biological role, catalyzes the cleavage of citrate into oxaloacetate and acetyl-CoA, the latter serving as common substrate in multiple biochemical reactions in protein, carbohydrate and lipid metabolism. In Caenorhabditis elegans, this protein is Probable ATP-citrate synthase.